Consider the following 64-residue polypeptide: Large ribosomal subunit protein bL28 (64 aa).

Belongs to the bacterial ribosomal protein bL28 family.

The protein is Large ribosomal subunit protein bL28 of Elusimicrobium minutum (strain Pei191).